We begin with the raw amino-acid sequence, 105 residues long: Large ribosomal subunit protein bL21 (105 aa).

The protein belongs to the bacterial ribosomal protein bL21 family. In terms of assembly, part of the 50S ribosomal subunit. Contacts protein L20.

This protein binds to 23S rRNA in the presence of protein L20. The protein is Large ribosomal subunit protein bL21 of Blochmanniella pennsylvanica (strain BPEN).